The chain runs to 254 residues: Triosephosphate isomerase (254 aa).

9 to 11 (NWK) provides a ligand contact to substrate. Catalysis depends on His95, which acts as the Electrophile. Glu167 functions as the Proton acceptor in the catalytic mechanism. Residues Gly173, Ser213, and 234-235 (GG) contribute to the substrate site.

This sequence belongs to the triosephosphate isomerase family. In terms of assembly, homodimer.

It localises to the cytoplasm. The catalysed reaction is D-glyceraldehyde 3-phosphate = dihydroxyacetone phosphate. The protein operates within carbohydrate biosynthesis; gluconeogenesis. It functions in the pathway carbohydrate degradation; glycolysis; D-glyceraldehyde 3-phosphate from glycerone phosphate: step 1/1. Its function is as follows. Involved in the gluconeogenesis. Catalyzes stereospecifically the conversion of dihydroxyacetone phosphate (DHAP) to D-glyceraldehyde-3-phosphate (G3P). This chain is Triosephosphate isomerase, found in Roseiflexus castenholzii (strain DSM 13941 / HLO8).